A 453-amino-acid chain; its full sequence is Alpha-2B adrenergic receptor (453 aa).

Over 1-17 the chain is Extracellular; sequence MSGPTMDHQEPYSVQAT. The helical transmembrane segment at 18 to 42 threads the bilayer; it reads AAIASAITFLILFTIFGNALVILAV. The Cytoplasmic segment spans residues 43–54; it reads LTSRSLRAPQNL. A helical transmembrane segment spans residues 55 to 80; the sequence is FLVSLAAADILVATLIIPFSLANELL. Residues 81-90 lie on the Extracellular side of the membrane; sequence GYWYFWRAWC. An intrachain disulfide couples Cys90 to Cys169. Residues 91–113 traverse the membrane as a helical segment; sequence EVYLALDVLFCTSSIVHLCAISL. The Cytoplasmic portion of the chain corresponds to 114–135; the sequence is DRYWAVSRALEYNSKRTPRRIK. The chain crosses the membrane as a helical span at residues 136-158; that stretch reads CIILTVWLIAAVISLPPLIYKGD. Residues 159–174 lie on the Extracellular side of the membrane; sequence QRPEPRGLPQCELNQE. A helical membrane pass occupies residues 175–198; it reads AWYILASSIGSFFAPCLIMILVYL. The Cytoplasmic segment spans residues 199–375; that stretch reads RIYVIAKRSH…LSREKRFTFV (177 aa). Residues 213–331 form a disordered region; sequence GAKRGSGEGE…PASVCNPPLQ (119 aa). The span at 287–297 shows a compositional bias: polar residues; that stretch reads GQGQKKGTSGA. Residues 300–314 are compositionally biased toward acidic residues; that stretch reads EEGDEEDEEEVEECE. Residues 376-399 traverse the membrane as a helical segment; that stretch reads LAVVIGVFVVCWFPFFFSYSLGAI. Topologically, residues 400–408 are extracellular; the sequence is CPQHCKVPH. A helical membrane pass occupies residues 409 to 432; that stretch reads GLFQFFFWIGYCNSSLNPVIYTVF. The Cytoplasmic segment spans residues 433-453; sequence NQDFRRAFRRILCRPWTQTGW. Cys445 is lipidated: S-palmitoyl cysteine.

This sequence belongs to the G-protein coupled receptor 1 family. Adrenergic receptor subfamily. ADRA2B sub-subfamily. Interacts with RAB26. Interacts with PPP1R9B. Interacts with GGA1, GGA2 and GGA3.

It is found in the cell membrane. In terms of biological role, alpha-2 adrenergic receptors mediate the catecholamine-induced inhibition of adenylate cyclase through the action of G proteins. The protein is Alpha-2B adrenergic receptor (Adra2b) of Rattus norvegicus (Rat).